A 332-amino-acid polypeptide reads, in one-letter code: Glycerol-3-phosphate dehydrogenase [NAD(P)+] (332 aa).

NADPH is bound by residues W11, R30, and K108. Residues K108, G137, and S139 each contribute to the sn-glycerol 3-phosphate site. A141 serves as a coordination point for NADPH. Sn-glycerol 3-phosphate-binding residues include K192, D245, S255, R256, and N257. The active-site Proton acceptor is the K192. R256 lines the NADPH pocket. The NADPH site is built by V280 and E282.

The protein belongs to the NAD-dependent glycerol-3-phosphate dehydrogenase family.

It localises to the cytoplasm. The catalysed reaction is sn-glycerol 3-phosphate + NAD(+) = dihydroxyacetone phosphate + NADH + H(+). It catalyses the reaction sn-glycerol 3-phosphate + NADP(+) = dihydroxyacetone phosphate + NADPH + H(+). It functions in the pathway membrane lipid metabolism; glycerophospholipid metabolism. Its function is as follows. Catalyzes the reduction of the glycolytic intermediate dihydroxyacetone phosphate (DHAP) to sn-glycerol 3-phosphate (G3P), the key precursor for phospholipid synthesis. In Burkholderia cenocepacia (strain ATCC BAA-245 / DSM 16553 / LMG 16656 / NCTC 13227 / J2315 / CF5610) (Burkholderia cepacia (strain J2315)), this protein is Glycerol-3-phosphate dehydrogenase [NAD(P)+].